A 399-amino-acid chain; its full sequence is Formaldehyde dismutase (399 aa).

C46 contributes to the Zn(2+) binding site. 47–51 (GSDQH) provides a ligand contact to NAD(+). Residues H67, C97, C100, C103, C111, and D170 each coordinate Zn(2+). T174 contributes to the NAD(+) binding site. Residue H177 participates in Zn(2+) binding. NAD(+)-binding positions include 197 to 198 (PV), 218 to 219 (DQ), R223, V263, H268, P299, 299 to 301 (PGI), and 336 to 338 (GMA).

This sequence belongs to the zinc-containing alcohol dehydrogenase family. In terms of assembly, homotetramer. It depends on Zn(2+) as a cofactor. Requires NAD(+) as cofactor. NADH serves as cofactor.

The enzyme catalyses 2 formaldehyde + H2O = methanol + formate + H(+). With respect to regulation, inhibited by the substrate analog pyrazole but not by NAD analogs such as AMP, ADP, ATP or N-methylnicotinamide chloride. Active against a range of primary alcohols as well as some secondary alcohols. Exhibits higher activity against alcohols with longer carbon chains. The sequence is that of Formaldehyde dismutase from Pseudomonas putida (Arthrobacter siderocapsulatus).